A 340-amino-acid chain; its full sequence is Protein FAM50A-A (340 aa).

Disordered regions lie at residues 1–22 and 123–178; these read MAQYKGAASEAGRAMQLMKKRE and NLEE…EEEN. Residues 124–146 are compositionally biased toward acidic residues; sequence LEEDEECEDEEGEEEESDKEDPP. The segment covering 169 to 178 has biased composition (basic and acidic residues); the sequence is PDRDREEEEN.

The protein resides in the nucleus. In terms of biological role, probably involved in the regulation of pre-mRNA splicing. This is Protein FAM50A-A (fam50a-a) from Xenopus laevis (African clawed frog).